A 61-amino-acid chain; its full sequence is Metallothionein-1F (61 aa).

The residue at position 1 (Met-1) is an N-acetylmethionine. Residues 1-29 (MDPNCSCAAGVSCTCAGSCKCKECKCTSC) form a beta region. A divalent metal cation-binding residues include Cys-5, Cys-7, Cys-13, Cys-15, Cys-19, Cys-21, Cys-24, Cys-26, Cys-29, Cys-33, Cys-34, Cys-36, Cys-37, Cys-41, Cys-44, Cys-48, Cys-50, and Cys-57. Residues 30–61 (KKSCCSCCPVGCSKCAQGCVCKGASEKCSCCD) form an alpha region. Ser-58 carries the post-translational modification Phosphoserine. The a divalent metal cation site is built by Cys-59 and Cys-60.

It belongs to the metallothionein superfamily. Type 1 family. As to quaternary structure, monomer.

In terms of biological role, metallothioneins have a high content of cysteine residues that bind various heavy metals; these proteins are transcriptionally regulated by both heavy metals and glucocorticoids. The chain is Metallothionein-1F (MT1F) from Homo sapiens (Human).